The following is a 188-amino-acid chain: dCTP deaminase (188 aa).

DCTP contacts are provided by residues 111-116, 135-137, Gln-156, Tyr-170, and Gln-180; these read KSTYAR and TLE. Glu-137 (proton donor/acceptor) is an active-site residue.

The protein belongs to the dCTP deaminase family. In terms of assembly, homotrimer.

The catalysed reaction is dCTP + H2O + H(+) = dUTP + NH4(+). Its pathway is pyrimidine metabolism; dUMP biosynthesis; dUMP from dCTP (dUTP route): step 1/2. Its function is as follows. Catalyzes the deamination of dCTP to dUTP. The chain is dCTP deaminase from Ralstonia pickettii (strain 12J).